The chain runs to 543 residues: Thiamine transport system permease protein ThiP (543 aa).

12 helical membrane passes run 19 to 39 (VAGG…LLAL), 64 to 84 (FTIW…IPIA), 102 to 122 (LFAL…TSIY), 142 to 162 (DIYG…PLAV), 205 to 225 (GMIG…LTLG), 250 to 270 (AVAL…ILRL), 300 to 320 (IIVI…VVVS), 343 to 363 (LALG…LVAA), 379 to 399 (GASL…FILL), 406 to 426 (FVMA…PFAV), 468 to 488 (GMAF…IALF), and 510 to 530 (FDAA…MMIA). Positions 62–266 (ARFTIWQAVA…QLALTLLILL (205 aa)) constitute an ABC transmembrane type-1 1 domain. The 192-residue stretch at 339 to 530 (IATSLALGFS…VLCLALMMIA (192 aa)) folds into the ABC transmembrane type-1 2 domain.

This sequence belongs to the binding-protein-dependent transport system permease family. CysTW subfamily. The complex is composed of two ATP-binding proteins (ThiQ), two transmembrane proteins (ThiP) and a solute-binding protein (ThiB).

The protein localises to the cell inner membrane. Its function is as follows. Part of the ABC transporter complex ThiBPQ involved in thiamine import. Probably responsible for the translocation of the substrate across the membrane. The polypeptide is Thiamine transport system permease protein ThiP (thiP) (Brucella abortus (strain 2308)).